The following is an 823-amino-acid chain: Lon protease (823 aa).

One can recognise a Lon N-terminal domain in the interval 22–217 (LPLLPVRDVV…KVNEHLNKEH (196 aa)). Residue 369–376 (GPPGVGKT) participates in ATP binding. Residues 605 to 786 (KNEVGIVTGL…DDVLAVALET (182 aa)) enclose the Lon proteolytic domain. Catalysis depends on residues Ser692 and Lys735. The tract at residues 788–823 (PPPPPASEGKPAATVKAPPRRGIAAPRKGAMAGAKS) is disordered.

The protein belongs to the peptidase S16 family. In terms of assembly, homohexamer. Organized in a ring with a central cavity.

It localises to the cytoplasm. The enzyme catalyses Hydrolysis of proteins in presence of ATP.. In terms of biological role, ATP-dependent serine protease that mediates the selective degradation of mutant and abnormal proteins as well as certain short-lived regulatory proteins. Required for cellular homeostasis and for survival from DNA damage and developmental changes induced by stress. Degrades polypeptides processively to yield small peptide fragments that are 5 to 10 amino acids long. Binds to DNA in a double-stranded, site-specific manner. This is Lon protease from Geobacter metallireducens (strain ATCC 53774 / DSM 7210 / GS-15).